Here is a 138-residue protein sequence, read N- to C-terminus: Small ribosomal subunit protein uS11c (138 aa).

The disordered stretch occupies residues 1–24 (MTKPIPRIGSRRNGRIGSRKSGRR). Residues 9 to 24 (GSRRNGRIGSRKSGRR) are compositionally biased toward basic residues.

It belongs to the universal ribosomal protein uS11 family. As to quaternary structure, part of the 30S ribosomal subunit.

The protein localises to the plastid. The protein resides in the chloroplast. This Liriodendron tulipifera (Tuliptree) protein is Small ribosomal subunit protein uS11c.